A 365-amino-acid chain; its full sequence is Aminomethyltransferase (365 aa).

The protein belongs to the GcvT family. As to quaternary structure, the glycine cleavage system is composed of four proteins: P, T, L and H.

The catalysed reaction is N(6)-[(R)-S(8)-aminomethyldihydrolipoyl]-L-lysyl-[protein] + (6S)-5,6,7,8-tetrahydrofolate = N(6)-[(R)-dihydrolipoyl]-L-lysyl-[protein] + (6R)-5,10-methylene-5,6,7,8-tetrahydrofolate + NH4(+). The glycine cleavage system catalyzes the degradation of glycine. The sequence is that of Aminomethyltransferase from Yersinia enterocolitica serotype O:8 / biotype 1B (strain NCTC 13174 / 8081).